Consider the following 496-residue polypeptide: Thiamine transporter 2 (496 aa).

The Cytoplasmic segment spans residues Met1–Ser7. The chain crosses the membrane as a helical span at residues Pro8–Met28. The Extracellular portion of the chain corresponds to Arg29–Asn53. N-linked (GlcNAc...) asparagine glycosylation occurs at Asn45. The chain crosses the membrane as a helical span at residues Glu54–Thr74. Residues Asp75–Pro81 lie on the Cytoplasmic side of the membrane. A helical transmembrane segment spans residues Val82 to Gly102. Residues Val103–Glu110 lie on the Extracellular side of the membrane. Residues Phe111–Val131 form a helical membrane-spanning segment. The Cytoplasmic segment spans residues Ser132–Arg144. The chain crosses the membrane as a helical span at residues Ser145–Ala165. The N-linked (GlcNAc...) asparagine glycan is linked to Asn166. Over Asn166–Tyr169 the chain is Extracellular. Residues Phe170 to Leu190 traverse the membrane as a helical segment. At Pro191–Ser282 the chain is on the cytoplasmic side. The tract at residues Ser210–Gln248 is disordered. Residues Glu218–Pro233 show a composition bias toward basic and acidic residues. Polar residues predominate over residues Thr234 to Gln248. Residues Leu283–Trp303 traverse the membrane as a helical segment. The Extracellular segment spans residues Asp304–Asn316. The helical transmembrane segment at Gly317–Val337 threads the bilayer. The Cytoplasmic portion of the chain corresponds to Lys338–Asp342. A helical transmembrane segment spans residues Leu343 to Met363. At His364–Gly375 the chain is on the extracellular side. A helical membrane pass occupies residues Tyr376–Val396. Residues Asn397 to Leu405 are Cytoplasmic-facing. The chain crosses the membrane as a helical span at residues Val406–Val426. Residues Asp427–Pro434 are Extracellular-facing. A helical transmembrane segment spans residues Ile435–Met455. Residues Arg456–Leu496 lie on the Cytoplasmic side of the membrane. A disordered region spans residues Asp469–Leu496.

The protein belongs to the reduced folate carrier (RFC) transporter (TC 2.A.48) family.

The protein localises to the membrane. The enzyme catalyses thiamine(out) + H(+)(in) = thiamine(in) + H(+)(out). The catalysed reaction is pyridoxine(out) + n H(+)(out) = pyridoxine(in) + n H(+)(in). Mediates high affinity thiamine uptake, probably via a proton anti-port mechanism. Has no folate transport activity. Mediates H(+)-dependent pyridoxine transport. The sequence is that of Thiamine transporter 2 (SLC19A3) from Macaca fascicularis (Crab-eating macaque).